A 297-amino-acid chain; its full sequence is Homoserine kinase (297 aa).

82–92 (PLTRGLGSSAS) is an ATP binding site.

This sequence belongs to the GHMP kinase family. Homoserine kinase subfamily.

It localises to the cytoplasm. It catalyses the reaction L-homoserine + ATP = O-phospho-L-homoserine + ADP + H(+). It participates in amino-acid biosynthesis; L-threonine biosynthesis; L-threonine from L-aspartate: step 4/5. In terms of biological role, catalyzes the ATP-dependent phosphorylation of L-homoserine to L-homoserine phosphate. The polypeptide is Homoserine kinase (Bacillus cereus (strain AH187)).